A 381-amino-acid chain; its full sequence is L-lactate dehydrogenase (381 aa).

Positions 1–380 (MIISASTDYR…TRDSLVRELG (380 aa)) constitute an FMN hydroxy acid dehydrogenase domain. Tyrosine 24 contributes to the substrate binding site. FMN is bound by residues serine 106 and glutamine 127. Substrate is bound at residue tyrosine 129. Threonine 155 contributes to the FMN binding site. Arginine 164 serves as a coordination point for substrate. Lysine 251 provides a ligand contact to FMN. Histidine 275 (proton acceptor) is an active-site residue. Substrate is bound at residue arginine 278. Position 306–330 (306–330 (DSGIRSGLDVVRMIALGADTVLIGR)) interacts with FMN.

Belongs to the FMN-dependent alpha-hydroxy acid dehydrogenase family. In terms of assembly, homotetramer. FMN serves as cofactor.

The protein localises to the cell inner membrane. The enzyme catalyses (S)-lactate + A = pyruvate + AH2. Catalyzes the conversion of L-lactate to pyruvate. Is coupled to the respiratory chain. This is L-lactate dehydrogenase from Pseudomonas putida (strain ATCC 700007 / DSM 6899 / JCM 31910 / BCRC 17059 / LMG 24140 / F1).